The following is an 859-amino-acid chain: Leucine--tRNA ligase (859 aa).

The short motif at 42 to 52 (PYPSGRLHMGH) is the 'HIGH' region element. Positions 618-622 (KMSKS) match the 'KMSKS' region motif. An ATP-binding site is contributed by lysine 621.

Belongs to the class-I aminoacyl-tRNA synthetase family.

The protein localises to the cytoplasm. It carries out the reaction tRNA(Leu) + L-leucine + ATP = L-leucyl-tRNA(Leu) + AMP + diphosphate. The sequence is that of Leucine--tRNA ligase from Shewanella baltica (strain OS195).